Here is a 721-residue protein sequence, read N- to C-terminus: Mitogen-activated protein kinase 6 (721 aa).

A Peptide (Met-Gly) (interchain with G-Cter in ubiquitin) cross-link involves residue methionine 1. Residues 20–316 (YMDLKPLGCG…AEEALSHPYM (297 aa)) form the Protein kinase domain. ATP-binding positions include 26–34 (LGCGGNGLV) and lysine 49. Aspartate 152 (proton acceptor) is an active-site residue. Serine 189 carries the post-translational modification Phosphoserine; by PAK1, PAK2 and PAK3. The SEG motif signature appears at 189–191 (SEG). Positions 332–337 (FHIEDE) match the FRIEDE motif motif. Phosphoserine is present on residues serine 386, serine 452, serine 556, serine 558, serine 665, and serine 684. A compositionally biased stretch (polar residues) spans 701–715 (AMKSSPQIPHQTYSS). Residues 701 to 721 (AMKSSPQIPHQTYSSILKHLN) are disordered.

This sequence belongs to the protein kinase superfamily. CMGC Ser/Thr protein kinase family. MAP kinase subfamily. In terms of assembly, heterodimer with ERK4/MAPK4. Interacts with (via FRIEDE motif) MAPKAPK5. Interacts with UBE3A; this interaction may be indirect and mediated by HERC2, possibly via HERC2 interaction with NEURL4. It depends on Mg(2+) as a cofactor. In terms of processing, phosphorylated at Ser-189 by PAK1, PAK2 and PAK3 resulting in catalytic activation. Phosphorylated by MAPKAPK5 at other sites. Ubiquitination at Met-1 leads to degradation by the proteasome pathway.

The protein resides in the cytoplasm. The protein localises to the nucleus. It catalyses the reaction L-seryl-[protein] + ATP = O-phospho-L-seryl-[protein] + ADP + H(+). It carries out the reaction L-threonyl-[protein] + ATP = O-phospho-L-threonyl-[protein] + ADP + H(+). With respect to regulation, activated by phosphorylation at Ser-189. Atypical MAPK protein. Phosphorylates microtubule-associated protein 2 (MAP2) and MAPKAPK5. The precise role of the complex formed with MAPKAPK5 is still unclear, but the complex follows a complex set of phosphorylation events: upon interaction with atypical MAPKAPK5, ERK3/MAPK6 is phosphorylated at Ser-189 and then mediates phosphorylation and activation of MAPKAPK5, which in turn phosphorylates ERK3/MAPK6. May promote entry in the cell cycle. The sequence is that of Mitogen-activated protein kinase 6 (MAPK6) from Pongo abelii (Sumatran orangutan).